The primary structure comprises 133 residues: Interleukin-4 (133 aa).

Positions Met1–Gly24 are cleaved as a signal peptide. 3 disulfides stabilise this stretch: Cys27/Cys133, Cys48/Cys85, and Cys70/Cys105. A glycan (N-linked (GlcNAc...) asparagine) is linked at Asn62.

This sequence belongs to the IL-4/IL-13 family.

It is found in the secreted. Its function is as follows. Participates in at least several B-cell activation processes as well as of other cell types. It is a costimulator of DNA-synthesis. It induces the expression of class II MHC molecules on resting B-cells. It enhances both secretion and cell surface expression of IgE and IgG1. It also regulates the expression of the low affinity Fc receptor for IgE (CD23) on both lymphocytes and monocytes. Positively regulates IL31RA expression in macrophages. Stimulates autophagy in dendritic cells by interfering with mTORC1 signaling and through the induction of RUFY4. This is Interleukin-4 (IL4) from Sus scrofa (Pig).